The sequence spans 757 residues: MDVNPTLLFLKVPAQNAISTTFPYTGDPPYSHGTGTGYTMDTVNRTHQYSEKGRWTTNTETGAPQLNPIDGPLPEDNEPSGYAQTDCVLEAMAFLEESHPGIFENSCLETMEVVQQTRVDKLTQGRQTYDWTLNRNQPAATALANTIEVFRSNGLTANESGRLIDFLKDVMESMDKEEMEITTHFQRKRRVRDNMTKKMVTQRTIGKKKQRLNKRSYLIRALTLNTMTKDAERGKLKRRAIATPGMQIRGFVYFVETLARSICEKLEQSGLPVGGNEKKAKLANVVRKMMTNSQDTELSFTITGDNTKWNENQNPRMFLAMITYITRNQPEWFRNVLSIAPIMFSNKMARLGKGYMFESKSMKLRTQIPAEMLASIDLKYFNDSTRKKIEKIRPLLIDGTASLSPGMMMGMFNMLSTVLGVSILNLGQKRYTKTTYWWDGLQSSDDFALIVNAPNHEGIQAGVDRFYRTCKLLGINMSKKKSYINRTGTFEFTSFFYRYGFVANFSMELPSFGVSGINESADMSIGVTVIKNNMINNDLGPATAQMALQLFIKDYRYTYRCHRGDTQIQTRRSFEIKKLWEQTRSKAGLLVSDGGPNLYNIRNLHIPEVCLKWELMDEDYQGRLCNPLNPFVSHKEIESVNNAVMMPAHGPAKNMEYDAVATTHSWIPKRNRSILNTSQRGILEDEQMYQKCCNLFEKFFPSSSYRRPVGISSMVEAMVSRARIDARIDFESGRIKKEEFAEIMKICSTIEELRRQK.

The disordered stretch occupies residues 53–82 (GRWTTNTETGAPQLNPIDGPLPEDNEPSGY). Polar residues predominate over residues 55 to 64 (WTTNTETGAP). 2 short sequence motifs (nuclear localization signal) span residues 187–195 (RKRRVRDNM) and 203–216 (RTIG…NKRS). The interval 249–256 (RGFVYFVE) is promoter-binding site. Residues 286–483 (VRKMMTNSQD…GINMSKKKSY (198 aa)) enclose the RdRp catalytic domain.

Belongs to the influenza viruses polymerase PB1 family. Influenza RNA polymerase is composed of three subunits: PB1, PB2 and PA. Interacts (via N-terminus) with PA (via C-terminus). Interacts (via C-terminus) with PB2 (via N-terminus); this interaction is essential for transcription initiation. Interacts (via C-terminus) with human PKP2 (via N-terminus); the interaction competitively inhibits the interaction between the RNA polymerase subunits PB1 and PB2. Phosphorylated by host PRKCA.

The protein resides in the host nucleus. Its subcellular location is the host cytoplasm. It catalyses the reaction RNA(n) + a ribonucleoside 5'-triphosphate = RNA(n+1) + diphosphate. In terms of biological role, RNA-dependent RNA polymerase which is responsible for replication and transcription of virus RNA segments. The transcription of viral mRNAs occurs by a unique mechanism called cap-snatching. 5' methylated caps of cellular mRNAs are cleaved after 10-13 nucleotides by PA. In turn, these short capped RNAs are used as primers by PB1 for transcription of viral mRNAs. During virus replication, PB1 initiates RNA synthesis and copy vRNA into complementary RNA (cRNA) which in turn serves as a template for the production of more vRNAs. This chain is RNA-directed RNA polymerase catalytic subunit, found in Influenza A virus (strain A/Brevig Mission/1/1918 H1N1) (Influenza A virus (strain A/South Carolina/1/1918 H1N1)).